We begin with the raw amino-acid sequence, 465 residues long: Alpha-2A adrenergic receptor (465 aa).

The Extracellular portion of the chain corresponds to 1 to 48 (MFRQEQPLAEGSFAPMGSLQPDAGNSSWNGTEAPGGGTRATPYSLQVT). 2 N-linked (GlcNAc...) asparagine glycosylation sites follow: N25 and N29. A helical transmembrane segment spans residues 49–74 (LTLVCLAGLLMLFTVFGNVLVIIAVF). At 75–85 (TSRALKAPQNL) the chain is on the cytoplasmic side. Residues 86 to 111 (FLVSLASADILVATLVIPFSLANEVM) form a helical membrane-spanning segment. The Extracellular segment spans residues 112 to 121 (GYWYFGKVWC). C121 and C203 are oxidised to a cystine. Residues 122-144 (EIYLALDVLFCTSSIVHLCAISL) traverse the membrane as a helical segment. Over 145–164 (DRYWSITQAIEYNLKRTPRR) the chain is Cytoplasmic. Residues 165–188 (IKAIIVTVWVISAVISFPPLISIE) traverse the membrane as a helical segment. Residues 189–207 (KKGAGGGQQPAEPSCKIND) are Extracellular-facing. A helical transmembrane segment spans residues 208-232 (QKWYVISSSIGSFFAPCLIMILVYV). Topologically, residues 233–389 (RIYQIAKRRT…RQNREKRFTF (157 aa)) are cytoplasmic. Positions 242–377 (TRVPPSRRGP…RAGGAKASRW (136 aa)) are disordered. Residues 313 to 330 (SSEHAERPQGPGKPERGP) are compositionally biased toward basic and acidic residues. At S346 the chain carries Phosphoserine. Positions 353 to 364 (GAAGPGASGSGQ) are enriched in gly residues. Position 368 is an omega-N-methylarginine (R368). A helical transmembrane segment spans residues 390-414 (VLAVVIGVFVVCWFPFFFTYTLIAV). Residues 415-424 (GCPVPYQLFN) are Extracellular-facing. The helical transmembrane segment at 425 to 445 (FFFWFGYCNSSLNPVIYTIFN) threads the bilayer. Residues 446 to 465 (HDFRRAFKKILCRGDRKRIV) are Cytoplasmic-facing. C457 carries S-palmitoyl cysteine lipidation.

The protein belongs to the G-protein coupled receptor 1 family. Adrenergic receptor subfamily. ADRA2A sub-subfamily. Expressed in brain.

It localises to the cell membrane. Its function is as follows. Alpha-2 adrenergic receptors mediate the catecholamine-induced inhibition of adenylate cyclase through the action of G proteins. The sequence is that of Alpha-2A adrenergic receptor from Rattus norvegicus (Rat).